A 211-amino-acid polypeptide reads, in one-letter code: Ribosomal RNA small subunit methyltransferase G (211 aa).

Residues glycine 73, phenylalanine 78, and arginine 141 each contribute to the S-adenosyl-L-methionine site.

Belongs to the methyltransferase superfamily. RNA methyltransferase RsmG family.

It is found in the cytoplasm. The catalysed reaction is guanosine(527) in 16S rRNA + S-adenosyl-L-methionine = N(7)-methylguanosine(527) in 16S rRNA + S-adenosyl-L-homocysteine. Its function is as follows. Specifically methylates the N7 position of guanine in position 527 of 16S rRNA. This Jannaschia sp. (strain CCS1) protein is Ribosomal RNA small subunit methyltransferase G.